The following is an 86-amino-acid chain: Small ribosomal subunit protein bS20 (86 aa).

The tract at residues 1–25 (MTNIKSQQKRNRTNERARLRNKSVK) is disordered.

The protein belongs to the bacterial ribosomal protein bS20 family.

Binds directly to 16S ribosomal RNA. This is Small ribosomal subunit protein bS20 from Mycobacterium leprae (strain Br4923).